The following is a 160-amino-acid chain: Small ribosomal subunit protein uS10m (160 aa).

This sequence belongs to the universal ribosomal protein uS10 family. In terms of assembly, component of the mitochondrial ribosome small subunit (28S) which comprises a 12S rRNA and about 30 distinct proteins.

It localises to the mitochondrion. In Mus musculus (Mouse), this protein is Small ribosomal subunit protein uS10m (Mrps10).